A 356-amino-acid polypeptide reads, in one-letter code: DNA polymerase IV (356 aa).

Residues Ile-7–Gly-188 form the UmuC domain. Positions 11 and 106 each coordinate Mg(2+). Residue Glu-107 is part of the active site.

This sequence belongs to the DNA polymerase type-Y family. Monomer. It depends on Mg(2+) as a cofactor.

The protein localises to the cytoplasm. It carries out the reaction DNA(n) + a 2'-deoxyribonucleoside 5'-triphosphate = DNA(n+1) + diphosphate. Functionally, poorly processive, error-prone DNA polymerase involved in untargeted mutagenesis. Copies undamaged DNA at stalled replication forks, which arise in vivo from mismatched or misaligned primer ends. These misaligned primers can be extended by PolIV. Exhibits no 3'-5' exonuclease (proofreading) activity. May be involved in translesional synthesis, in conjunction with the beta clamp from PolIII. In Listeria monocytogenes serotype 4b (strain CLIP80459), this protein is DNA polymerase IV.